A 95-amino-acid chain; its full sequence is Cytochrome b (95 aa).

3 helical membrane-spanning segments follow: residues 1–16, 40–61, and 76–95; these read GLCLASQLLTGLFLAM, WLIRNMHANGASFFFICIYLHI, and WNIGVVLLLLVMMTAFVGYV. Residues H46 and H60 each coordinate heme b.

It belongs to the cytochrome b family. As to quaternary structure, the cytochrome bc1 complex contains 3 respiratory subunits (MT-CYB, CYC1 and UQCRFS1), 2 core proteins (UQCRC1 and UQCRC2) and probably 6 low-molecular weight proteins. Requires heme b as cofactor.

It is found in the mitochondrion inner membrane. Its function is as follows. Component of the ubiquinol-cytochrome c reductase complex (complex III or cytochrome b-c1 complex) that is part of the mitochondrial respiratory chain. The b-c1 complex mediates electron transfer from ubiquinol to cytochrome c. Contributes to the generation of a proton gradient across the mitochondrial membrane that is then used for ATP synthesis. This chain is Cytochrome b (mt-cyb), found in Gomphosus varius (Bird wrasse).